We begin with the raw amino-acid sequence, 291 residues long: ATP synthase gamma chain (291 aa).

This sequence belongs to the ATPase gamma chain family. As to quaternary structure, F-type ATPases have 2 components, CF(1) - the catalytic core - and CF(0) - the membrane proton channel. CF(1) has five subunits: alpha(3), beta(3), gamma(1), delta(1), epsilon(1). CF(0) has three main subunits: a, b and c.

Its subcellular location is the cell inner membrane. Functionally, produces ATP from ADP in the presence of a proton gradient across the membrane. The gamma chain is believed to be important in regulating ATPase activity and the flow of protons through the CF(0) complex. This is ATP synthase gamma chain from Rhodopseudomonas palustris (strain HaA2).